The sequence spans 387 residues: 2-deoxystreptamine glucosyltransferase (387 aa).

This sequence belongs to the glycosyltransferase group 1 family.

It carries out the reaction 2-deoxystreptamine + UDP-N-acetyl-alpha-D-glucosamine = 2'-N-acetylparomamine + UDP + H(+). It catalyses the reaction 2-deoxystreptamine + UDP-alpha-D-glucose = 2'-deamino-2'-hydroxyparomamine + UDP + H(+). It participates in antibiotic biosynthesis; kanamycin biosynthesis. In terms of biological role, glycosyltransferase involved in the biosynthesis of kanamycin by mediating conversion of 2-deoxystreptamine (2-DOS) to 2'-N-acetylparomamine using UDP-alpha-D-glucose as sugar donor. Can also accept UDP-alpha-D-glucosamine, but with a much lower activity compared to UDP-alpha-D-glucose. This chain is 2-deoxystreptamine glucosyltransferase (kanF), found in Streptomyces kanamyceticus.